A 423-amino-acid chain; its full sequence is Gamma-glutamyl phosphate reductase (423 aa).

Belongs to the gamma-glutamyl phosphate reductase family.

The protein localises to the cytoplasm. The enzyme catalyses L-glutamate 5-semialdehyde + phosphate + NADP(+) = L-glutamyl 5-phosphate + NADPH + H(+). Its pathway is amino-acid biosynthesis; L-proline biosynthesis; L-glutamate 5-semialdehyde from L-glutamate: step 2/2. Catalyzes the NADPH-dependent reduction of L-glutamate 5-phosphate into L-glutamate 5-semialdehyde and phosphate. The product spontaneously undergoes cyclization to form 1-pyrroline-5-carboxylate. This chain is Gamma-glutamyl phosphate reductase, found in Pseudomonas putida (strain W619).